The primary structure comprises 198 residues: Probable host range protein 2 (198 aa).

Positions serine 171–glutamate 198 are disordered.

It belongs to the poxviridae C7 protein family.

In terms of biological role, plays a role for multiplication of the virus in different cell types. This chain is Probable host range protein 2, found in Bos taurus (Bovine).